The chain runs to 269 residues: Protein SET (269 aa).

The disordered stretch occupies residues 1-33 (MSSVPKRAKLDGAPADGNTSAAAGNNEEESEAL). Phosphoserine is present on residues Ser-30, Ser-148, and Ser-152. Residues 227–269 (LVPDIEVEPEDEEDNEDNDEEAFDDEDGEDGEGEEEEEDEDDK) form a disordered region. Positions 231–269 (IEVEPEDEEDNEDNDEEAFDDEDGEDGEGEEEEEDEDDK) are enriched in acidic residues.

It belongs to the nucleosome assembly protein (NAP) family. As to quaternary structure, interacts specifically with B-type cyclins.

This Drosophila melanogaster (Fruit fly) protein is Protein SET (Set).